The following is a 181-amino-acid chain: Acireductone dioxygenase (181 aa).

Residues His-97, His-99, Glu-103, and His-141 each coordinate Fe(2+). Residues His-97, His-99, Glu-103, and His-141 each coordinate Ni(2+).

The protein belongs to the acireductone dioxygenase (ARD) family. As to quaternary structure, monomer. It depends on Fe(2+) as a cofactor. The cofactor is Ni(2+).

The enzyme catalyses 1,2-dihydroxy-5-(methylsulfanyl)pent-1-en-3-one + O2 = 3-(methylsulfanyl)propanoate + CO + formate + 2 H(+). It carries out the reaction 1,2-dihydroxy-5-(methylsulfanyl)pent-1-en-3-one + O2 = 4-methylsulfanyl-2-oxobutanoate + formate + 2 H(+). It participates in amino-acid biosynthesis; L-methionine biosynthesis via salvage pathway; L-methionine from S-methyl-5-thio-alpha-D-ribose 1-phosphate: step 5/6. In terms of biological role, catalyzes 2 different reactions between oxygen and the acireductone 1,2-dihydroxy-3-keto-5-methylthiopentene (DHK-MTPene) depending upon the metal bound in the active site. Fe-containing acireductone dioxygenase (Fe-ARD) produces formate and 2-keto-4-methylthiobutyrate (KMTB), the alpha-ketoacid precursor of methionine in the methionine recycle pathway. Ni-containing acireductone dioxygenase (Ni-ARD) produces methylthiopropionate, carbon monoxide and formate, and does not lie on the methionine recycle pathway. In Stutzerimonas stutzeri (strain A1501) (Pseudomonas stutzeri), this protein is Acireductone dioxygenase.